The following is a 109-amino-acid chain: Cell division protein ZapA (109 aa).

Positions 21 to 99 (PEQQEALNQA…IEQALLEQGK (79 aa)) form a coiled coil.

The protein belongs to the ZapA family. Type 1 subfamily. Homodimer. Interacts with FtsZ.

It localises to the cytoplasm. Functionally, activator of cell division through the inhibition of FtsZ GTPase activity, therefore promoting FtsZ assembly into bundles of protofilaments necessary for the formation of the division Z ring. It is recruited early at mid-cell but it is not essential for cell division. The protein is Cell division protein ZapA of Pectobacterium atrosepticum (strain SCRI 1043 / ATCC BAA-672) (Erwinia carotovora subsp. atroseptica).